A 142-amino-acid chain; its full sequence is Hemoglobin subunit alpha-2 (142 aa).

Residues valine 2–arginine 142 enclose the Globin domain. Histidine 59 serves as a coordination point for O2. Histidine 88 is a heme b binding site.

This sequence belongs to the globin family. In terms of assembly, heterotetramer of two alpha chains and two beta chains.

Involved in oxygen transport from the lung to the various peripheral tissues. In terms of biological role, hemopressin acts as an antagonist peptide of the cannabinoid receptor CNR1. Hemopressin-binding efficiently blocks cannabinoid receptor CNR1 and subsequent signaling. This Capra hircus (Goat) protein is Hemoglobin subunit alpha-2 (HBA2).